The sequence spans 597 residues: Plasmepsin V (597 aa).

Topologically, residues 1-551 are lumenal; the sequence is MNNYFLRKEN…EKENIFLKVS (551 aa). Residues 33-88 adopt a coiled-coil conformation; sequence CNNVENKIDNVGKKIENVGKKIGDMENKNDNVENKNDNVENKNDNVGNKNDNVKNA. The segment covering 58-75 has biased composition (basic and acidic residues); sequence ENKNDNVENKNDNVENKN. The disordered stretch occupies residues 58–83; it reads ENKNDNVENKNDNVENKNDNVGNKND. In terms of domain architecture, Peptidase A1 spans 107 to 521; that stretch reads YFLDIDIGKP…DLQQNQIAFI (415 aa). D125 is a catalytic residue. Cystine bridges form between C135-C218, C138-C141, C162-C173, C167-C178, C266-C525, C396-C441, and C450-C486. Basic and acidic residues predominate over residues 289–298; sequence KEKQKMDKSD. Residues 289 to 323 are disordered; that stretch reads KEKQKMDKSDNNSSNKGNVSIKLKNNDKNDDEENN. A compositionally biased stretch (low complexity) spans 299 to 311; that stretch reads NNSSNKGNVSIKL. Residue D372 is part of the active site. A helical membrane pass occupies residues 552 to 572; that stretch reads YINLYCLWLLLALTILLSLIL. At 573-597 the chain is on the cytoplasmic side; sequence YVRKMFYMDYFPLSDQNKSPIQEST.

The protein belongs to the peptidase A1 family. Component of a complex composed of SPC25 and PMV; the interaction is mediated via the transmembrane domains. The complex interacts with the SEC61 channel-forming translocon complex and is involved in the recognition and import of PEXEL motif-containing proteins into the ER for subsequent export. Post-translationally, it is not clear if the zymogen has a cleavable propeptide. In vitro, appears to be cleaved between Asn-87 and Ala-88. Cleavage of the putative propeptide is dispensable for catalytic activity.

The protein localises to the endoplasmic reticulum membrane. During the asexual blood stage, plays an essential role in the export of several proteins into the host erythrocytes by cleaving the pentameric localization motif RxLxE/Q/D (termed Plasmodium export element (PEXEL)) located downstream of the N-terminal secretory signal sequence. Specifically, cleaves after the leucine residue in the RxLxE/Q/D (or RxLxxE) motif of exported proteins including RESA, EMP2, EMP3, KAHRP, RIF/Rifin and STEVOR. Also, by regulating protein export, plays an essential role in gametocyte development and thus parasite transmission to the mosquito vector. The sequence is that of Plasmepsin V from Plasmodium falciparum (isolate HB3).